We begin with the raw amino-acid sequence, 105 residues long: Putative RNA-binding protein RbpF (105 aa).

The region spanning 2–79 is the RRM domain; that stretch reads SIYVGNLSYE…RDLKVNKAKP (78 aa). The span at 75-84 shows a compositional bias: basic and acidic residues; that stretch reads NKAKPKEDRG. Residues 75 to 105 are disordered; that stretch reads NKAKPKEDRGSFGGGNRGGYGGGGGGGRSRY. Residues 85-105 show a composition bias toward gly residues; it reads SFGGGNRGGYGGGGGGGRSRY.

This Nostoc sp. (strain PCC 7120 / SAG 25.82 / UTEX 2576) protein is Putative RNA-binding protein RbpF (rbpF).